We begin with the raw amino-acid sequence, 290 residues long: Nucleotide-binding protein BPP4038 (290 aa).

G9–S16 is a binding site for ATP. D58 to S61 is a binding site for GTP.

This sequence belongs to the RapZ-like family.

Its function is as follows. Displays ATPase and GTPase activities. The chain is Nucleotide-binding protein BPP4038 from Bordetella parapertussis (strain 12822 / ATCC BAA-587 / NCTC 13253).